A 448-amino-acid chain; its full sequence is Ribosomal protein uS12 methylthiotransferase RimO (448 aa).

The MTTase N-terminal domain maps to 16-126 (PRISFVSLGC…VVAAVHEAVP (111 aa)). [4Fe-4S] cluster is bound by residues Cys-25, Cys-61, Cys-90, Cys-157, Cys-161, and Cys-164. The 238-residue stretch at 143–380 (LTPRHYAYLK…MEAQAGVSLK (238 aa)) folds into the Radical SAM core domain. Positions 383 to 448 (RAKVGKRLQV…DAYDLHGIAV (66 aa)) constitute a TRAM domain.

It belongs to the methylthiotransferase family. RimO subfamily. [4Fe-4S] cluster is required as a cofactor.

Its subcellular location is the cytoplasm. The enzyme catalyses L-aspartate(89)-[ribosomal protein uS12]-hydrogen + (sulfur carrier)-SH + AH2 + 2 S-adenosyl-L-methionine = 3-methylsulfanyl-L-aspartate(89)-[ribosomal protein uS12]-hydrogen + (sulfur carrier)-H + 5'-deoxyadenosine + L-methionine + A + S-adenosyl-L-homocysteine + 2 H(+). In terms of biological role, catalyzes the methylthiolation of an aspartic acid residue of ribosomal protein uS12. The protein is Ribosomal protein uS12 methylthiotransferase RimO of Methylorubrum populi (strain ATCC BAA-705 / NCIMB 13946 / BJ001) (Methylobacterium populi).